The primary structure comprises 163 residues: ATP synthase subunit b 1 (163 aa).

The chain crosses the membrane as a helical span at residues 5-25 (FDATFFAFVGLILFLALVVYL).

This sequence belongs to the ATPase B chain family. In terms of assembly, F-type ATPases have 2 components, F(1) - the catalytic core - and F(0) - the membrane proton channel. F(1) has five subunits: alpha(3), beta(3), gamma(1), delta(1), epsilon(1). F(0) has three main subunits: a(1), b(2) and c(10-14). The alpha and beta chains form an alternating ring which encloses part of the gamma chain. F(1) is attached to F(0) by a central stalk formed by the gamma and epsilon chains, while a peripheral stalk is formed by the delta and b chains.

It localises to the cell inner membrane. F(1)F(0) ATP synthase produces ATP from ADP in the presence of a proton or sodium gradient. F-type ATPases consist of two structural domains, F(1) containing the extramembraneous catalytic core and F(0) containing the membrane proton channel, linked together by a central stalk and a peripheral stalk. During catalysis, ATP synthesis in the catalytic domain of F(1) is coupled via a rotary mechanism of the central stalk subunits to proton translocation. In terms of biological role, component of the F(0) channel, it forms part of the peripheral stalk, linking F(1) to F(0). This Rhizobium etli (strain ATCC 51251 / DSM 11541 / JCM 21823 / NBRC 15573 / CFN 42) protein is ATP synthase subunit b 1.